The following is a 231-amino-acid chain: ADP-ribosylation factor-like protein 6-interacting protein 4 (231 aa).

Basic residues predominate over residues 1–19 (MAHVSSRKRSRSRSRSRGR). The tract at residues 1-154 (MAHVSSRKRS…EDNDGPVLTD (154 aa)) is disordered. The segment covering 20–34 (RGSEKRSKRSSKDSS) has biased composition (basic and acidic residues). The span at 64 to 89 (TSRSSSSSSSSSSSSSSSSTSSSSSS) shows a compositional bias: low complexity. Residues 92–119 (RKKRGKHKDKKKRKKKKKRKKKMKRKGK) are compositionally biased toward basic residues. Phosphoserine is present on residues Ser142 and Ser176. Residue Lys193 forms a Glycyl lysine isopeptide (Lys-Gly) (interchain with G-Cter in SUMO2) linkage.

Belongs to the ARL6IP4 family. As to quaternary structure, interacts with ARL6. Interacts with ZCCHC17. Interacts with SRSF2.

It is found in the nucleus. The protein resides in the nucleolus. The protein localises to the nucleus speckle. Involved in modulating alternative pre-mRNA splicing with either 5' distal site activation or preferential use of 3' proximal site. This Rattus norvegicus (Rat) protein is ADP-ribosylation factor-like protein 6-interacting protein 4 (Arl6ip4).